The chain runs to 254 residues: Small ribosomal subunit protein uS2 (254 aa).

The protein belongs to the universal ribosomal protein uS2 family.

This is Small ribosomal subunit protein uS2 from Legionella pneumophila (strain Lens).